A 358-amino-acid chain; its full sequence is Zinc-type alcohol dehydrogenase-like protein YogA (358 aa).

This sequence belongs to the zinc-containing alcohol dehydrogenase family. Quinone oxidoreductase subfamily.

The protein operates within secondary metabolite biosynthesis. Functionally, zinc-type alcohol dehydrogenase-like protein; part of the gene cluster that mediates the biosynthesis of phomenoic acid, a long chain aliphatic carboxylic acid that does not appear to be essential for pathogenicity but may play a role in allowing to outcompete other fungi in the environmental niche via its antifungal properties. The polyketide synthase produces the long methylated aliphatic carboxylic acid chain of phomenoic acid. The cluster-specific cytochrome P450 monooxygenase may then hydroxylate the methyl group of carbon 31. The putative dehydrogenase YogA, which has no obvious role in phomenoic acid biosynthesis, may further modify phomenoic acid to produce a compound not identified yet. The polypeptide is Zinc-type alcohol dehydrogenase-like protein YogA (Leptosphaeria maculans (strain JN3 / isolate v23.1.3 / race Av1-4-5-6-7-8) (Blackleg fungus)).